We begin with the raw amino-acid sequence, 541 residues long: MAKQILYHESARRALEKGMDILAEAVAVTLGPKGRNVVLEKKFGAPQIVNDGVTIAKEIELEDHIENTGVALIRQAASKTNDVAGDGTTTATVLAYAMVKEGMRNVAAGANPMAIKRGIDRATQKVVETIAAHAKPVEDSRAITQVASISAGNDDEVGKMIADAIEKVGKEGVISLEEGKSTTTELEITEGMRFDKGYISPYFVTDPERMEVIQKDAMFLITDKKITLVQDLVPILEQVARARKPLFIIAEDIEKEALATLVVNKLRGNLNVSAVKAPGFGDRRKAMMQDIAVLTNTQVISEQTGLRLDSIKLDVLGKARQVNITKDYTTVIAEGNEEGVSARCEQIRRQIEETDSAYEKEKLQERLAKLAGGVAVIKVGAATETEMKDKKLRLEDAINATKAAVEEGIVPGGGTTLAHLAIELENWVQSNLEHEELIGGMIVARSLTAPLKRIVENAGQNGAVIAEQVKDKPFNIGYNAANAQFVDMFEAGIVDPAKVTRSGLQNAASIAGMVLTTECIVVDKAESQQKAASVNRNSFDY.

Residues threonine 29–proline 32, aspartate 86–threonine 90, glycine 413, asparagine 479–alanine 481, and aspartate 495 each bind ATP.

It belongs to the chaperonin (HSP60) family. Forms a cylinder of 14 subunits composed of two heptameric rings stacked back-to-back. Interacts with the co-chaperonin GroES.

It localises to the plastid. It is found in the cyanelle. It catalyses the reaction ATP + H2O + a folded polypeptide = ADP + phosphate + an unfolded polypeptide.. In terms of biological role, together with its co-chaperonin GroES, plays an essential role in assisting protein folding. The GroEL-GroES system forms a nano-cage that allows encapsulation of the non-native substrate proteins and provides a physical environment optimized to promote and accelerate protein folding. The chain is Chaperonin GroEL, cyanelle from Cyanophora paradoxa.